The following is a 466-amino-acid chain: Arginine biosynthesis bifunctional protein ArgJ, mitochondrial (466 aa).

The N-terminal 9 residues, 1–9, are a transit peptide targeting the mitochondrion; it reads MSSLVLKRF. Substrate contacts are provided by threonine 183, lysine 209, threonine 232, glutamate 320, asparagine 461, and serine 466. The Nucleophile role is filled by threonine 232.

It belongs to the ArgJ family. Heterodimer of an alpha and a beta chain. In terms of processing, the alpha and beta chains are autoproteolytically processed from a single precursor protein within the mitochondrion.

Its subcellular location is the mitochondrion matrix. The enzyme catalyses N(2)-acetyl-L-ornithine + L-glutamate = N-acetyl-L-glutamate + L-ornithine. It catalyses the reaction L-glutamate + acetyl-CoA = N-acetyl-L-glutamate + CoA + H(+). Its pathway is amino-acid biosynthesis; L-arginine biosynthesis; L-ornithine and N-acetyl-L-glutamate from L-glutamate and N(2)-acetyl-L-ornithine (cyclic): step 1/1. It participates in amino-acid biosynthesis; L-arginine biosynthesis; N(2)-acetyl-L-ornithine from L-glutamate: step 1/4. Catalyzes two activities which are involved in the cyclic version of arginine biosynthesis: the synthesis of acetylglutamate from glutamate and acetyl-CoA, and of ornithine by transacetylation between acetylornithine and glutamate. This is Arginine biosynthesis bifunctional protein ArgJ, mitochondrial from Laccaria bicolor (strain S238N-H82 / ATCC MYA-4686) (Bicoloured deceiver).